Here is a 473-residue protein sequence, read N- to C-terminus: DNA-binding protein (473 aa).

Disordered stretches follow at residues 1-69 (MAGR…GFSH) and 85-111 (RRLE…SKAV). Residues 7 to 18 (ELPTITPYLQET) are compositionally biased toward polar residues. Acidic residues predominate over residues 53–62 (PDSEEEEEEV). Phosphotyrosine; by host is present on tyrosine 141. Cysteine 230 and histidine 232 together coordinate Zn(2+). The segment at 243–277 (VEMDVASENAQRALKEHPSRAKVVQNRWGRSVVQL) is flexible loop. Zn(2+)-binding residues include cysteine 285, cysteine 301, cysteine 342, cysteine 344, cysteine 396, and cysteine 412. A C-terminal arm, DBP binding region spans residues 459-473 (VALPASHGDGEKEPF).

It belongs to the adenoviridae E2A DNA-binding protein family. Homomultimerizes on viral ssDNA bound to pTP. Forms a initiation complex with viral polymerase, pTP and hosts NFIA and POU2F1/OCT1. Interacts with host SRCAP.

It localises to the host nucleus. Functionally, plays a role in the elongation phase of viral strand displacement replication by unwinding the template in an ATP-independent fashion, employing its capacity to form multimers. Also enhances the rate of initiation. Released from template upon second strand synthesis. Assembles in complex with viral pTP, viral pol, host NFIA and host POU2F1/OCT1 on viral origin of replication. Covers the whole ssDNA genome during synthesis. The complementary strand synthesis induces its relese from DNA template. May inhibit cellular transcription mediated by the interaction between host SRCAP and CBP. The protein is DNA-binding protein of Homo sapiens (Human).